The sequence spans 70 residues: Mu-conotoxin PnIVB (70 aa).

A signal peptide spans 1–20 (MMSKLGVLLIICLLLCPLTA). Residues 21 to 51 (VPQDGDQPADQPAERMQDDISSEHHPFFDPV) constitute a propeptide that is removed on maturation.

In terms of processing, contains 3 disulfide bonds. They are not added, since framework IV presents two different connectivities (I-V, II-III, IV-VI and I-III, II-V, IV-VI). As to expression, expressed by the venom duct.

Its subcellular location is the secreted. Mu-conotoxins block voltage-gated sodium channels (Nav). Blocks reversibly sodium channels in molluskan neurons, but has no effect on sodium currents in bovine chromaffin cells or in rat brain synaptosomes. Induces paralysis in bivalve mollusks (Mytilus). No effect are observed on fish (Gambusia) and fly larvae (Sarcophaga). Is approximately 6 times more potent than PnIVA in blockade of the sodium current in Lymnaea neurons. This Conus pennaceus (Feathered cone) protein is Mu-conotoxin PnIVB.